A 424-amino-acid polypeptide reads, in one-letter code: MSCVSSISSKRSRCEGFDDDFIHTPLKKCSKGYHEWSLSITTPATTPTGKLDYKRKTKSLDDDLISSPVKFGTDANVLNAEFQELSLQKLLVSLSTSDDSKSNPIFHIPELLHRIFNFLDHESLYRCSKVNPVWAAVASSIINKDLVIQQSSISGDLKIVELDQKVHPKSLTFYKLKQHRNFIENQLPRIRFTRLNSLNFYISPVLPAIFDDVTISNNLTKLTIAGNKKINDEELISLILGLPNLIDLDLRACSQISDISIVSIVTHCPKLQSINLGRHENSHLITDLSIMALSELEHLTTVGFSGCDKISDVSIWQLYSKHSTTLVRLSINGCTQISDSSISDIVAKHGFPNLKVLDIRNCQLVRFKNLIQYRDWRHKYLMKPIHIHISDSMKKEFELQEQQLYKEFRTRIVNDLNRWVNEAT.

The protein belongs to the AMN1 family.

The protein localises to the cytoplasm. Its subcellular location is the nucleus. Its function is as follows. Negative regulator of the mitotic exit network (MEN), required for multiple cell cycle checkpoints. Required for daughter cell separation and chromosome stability. Involved in copper sensitivity. In Kluyveromyces lactis (strain ATCC 8585 / CBS 2359 / DSM 70799 / NBRC 1267 / NRRL Y-1140 / WM37) (Yeast), this protein is Antagonist of mitotic exit network protein 1 (AMN1).